Reading from the N-terminus, the 86-residue chain is Neurotoxin E1x (86 aa).

An N-terminal signal peptide occupies residues 1–19 (MNSLLMITACLVVIGTVWA). The 65-residue stretch at 20 to 84 (KEGYLVDVKG…TWPLPNKTCG (65 aa)) folds into the LCN-type CS-alpha/beta domain. 4 cysteine pairs are disulfide-bonded: C30/C83, C34/C59, C43/C64, and C47/C66. C83 carries the post-translational modification Cysteine amide.

It belongs to the long (4 C-C) scorpion toxin superfamily. Sodium channel inhibitor family. Beta subfamily. In terms of tissue distribution, expressed by the venom gland.

It is found in the secreted. Functionally, binds to sodium channels (Nav) and inhibits the inactivation of the activated channels, thereby blocking neuronal transmission. The sequence is that of Neurotoxin E1x from Centruroides sculpturatus (Arizona bark scorpion).